The following is an 825-amino-acid chain: Actin filament-associated protein 1-like 2 (825 aa).

Y56 is subject to Phosphotyrosine. The tract at residues 62–163 (VNGEQNSASP…SKGKAAPYQW (102 aa)) is disordered. Residues 80–94 (PLTNGEPSQHSSAPQ) show a composition bias toward polar residues. A Phosphothreonine modification is found at T113. 2 PH domains span residues 175 to 271 (DARI…EVSG) and 353 to 447 (SLET…SESG). S408 is modified (phosphoserine). Position 413 is a phosphotyrosine (Y413). A Phosphoserine modification is found at S484. The disordered stretch occupies residues 571–614 (TLTVDPKPGTTPEEPHTESPGDPEVQQRQPEVQESSEPIEPTPR). Low complexity predominate over residues 593-608 (PEVQQRQPEVQESSEP). The stretch at 657–754 (AEIKLGKNRT…VKDNLKKAEA (98 aa)) forms a coiled coil. Residues 757–801 (VTLGTTVDTTHLDNMSPRPQPKAATPNPPPDSTPVNSASVLKNRP) are disordered. The span at 759 to 769 (LGTTVDTTHLD) shows a compositional bias: polar residues.

Interacts with SRC. Interacts with LCK when tyrosine phosphorylated. Post-translationally, tyrosine phosphorylated (by SRC).

The protein resides in the cytoplasm. May play a role in a signaling cascade by enhancing the kinase activity of SRC. Contributes to SRC-regulated transcription activation. This is Actin filament-associated protein 1-like 2 (Afap1l2) from Mus musculus (Mouse).